The primary structure comprises 116 residues: Spermadhesin Z13 (116 aa).

2 disulfide bridges follow: C14/C35 and C58/C79. Residues C14–V115 form the CUB domain.

It belongs to the spermadhesin family. As to quaternary structure, homodimer; disulfide-linked. In terms of tissue distribution, seminal plasma.

It is found in the secreted. May be involved in the fertilization process. The sequence is that of Spermadhesin Z13 from Bos taurus (Bovine).